The following is a 205-amino-acid chain: Glycerol-3-phosphate acyltransferase (205 aa).

The next 6 helical transmembrane spans lie at 5–25 (LALG…GYLA), 54–74 (GPAA…VWLA), 87–107 (IVLG…WLAF), 117–137 (VGLL…VWGV), 138–158 (CFAV…ATPL), and 162–182 (LWRA…YIVW).

Belongs to the PlsY family. Probably interacts with PlsX.

It localises to the cell inner membrane. The catalysed reaction is an acyl phosphate + sn-glycerol 3-phosphate = a 1-acyl-sn-glycero-3-phosphate + phosphate. Its pathway is lipid metabolism; phospholipid metabolism. Its function is as follows. Catalyzes the transfer of an acyl group from acyl-phosphate (acyl-PO(4)) to glycerol-3-phosphate (G3P) to form lysophosphatidic acid (LPA). This enzyme utilizes acyl-phosphate as fatty acyl donor, but not acyl-CoA or acyl-ACP. This is Glycerol-3-phosphate acyltransferase from Gloeobacter violaceus (strain ATCC 29082 / PCC 7421).